The sequence spans 179 residues: Peptide deformylase (179 aa).

Positions 102 and 144 each coordinate Fe cation. Residue E145 is part of the active site. Position 148 (H148) interacts with Fe cation.

The protein belongs to the polypeptide deformylase family. Fe(2+) serves as cofactor.

It catalyses the reaction N-terminal N-formyl-L-methionyl-[peptide] + H2O = N-terminal L-methionyl-[peptide] + formate. Removes the formyl group from the N-terminal Met of newly synthesized proteins. Requires at least a dipeptide for an efficient rate of reaction. N-terminal L-methionine is a prerequisite for activity but the enzyme has broad specificity at other positions. The protein is Peptide deformylase of Wolbachia sp. subsp. Drosophila simulans (strain wRi).